Here is a 748-residue protein sequence, read N- to C-terminus: Spidroin-1 (748 aa).

25 consecutive repeat copies span residues 1–25 (QGAG…GGQG), 26–38 (AGQG…GGQG), 39–66 (AGQG…GSQG), 67–96 (AGRG…GSQG), 97–130 (AGRG…GNQG), 131–158 (AGRG…GSQG), 159–191 (AGRG…GGQG), 192–204 (AGQG…GSQG), 205–235 (AGRG…GGQG), 236–262 (AGQG…GSQG), 263–292 (AGRG…GGQG), 293–305 (AGQG…GSQG), 306–333 (AGRG…GGQG), 334–360 (AGQG…GSQG), 361–394 (AGRG…GSQG), 395–424 (AGRG…GNQG), 425–458 (AGRG…GNQG), 459–485 (AGRG…GSQG), 486–512 (AGRG…RGQG), 513–525 (AGQG…GSQG), 526–555 (SGRG…GGQG), 556–582 (AGQG…GSQG), 583–612 (AGRG…GGQG), 613–642 (VGRG…VGSG), and 643–655 (ASAA…RLSS). Residues 1-655 (QGAGAAAAAA…ASAAASRLSS (655 aa)) form a 25 X approximate tandem repeats region.

Belongs to the silk fibroin family. In terms of assembly, major subunit, with spidroin 2, of the dragline silk.

Its subcellular location is the secreted. It is found in the extracellular space. Spiders' major ampullate silk possesses unique characteristics of strength and elasticity. Fibroin consists of pseudocrystalline regions of antiparallel beta-sheet interspersed with elastic amorphous segments. This chain is Spidroin-1, found in Trichonephila clavipes (Golden silk orbweaver).